Here is a 157-residue protein sequence, read N- to C-terminus: Methylglyoxal synthase (157 aa).

The 157-residue stretch at 1-157 folds into the MGS-like domain; the sequence is MSKVKNIAVV…DFSSYTQRKL (157 aa). Substrate-binding positions include H12, K16, 38–41, and 71–72; these read TGTT and SG. D77 functions as the Proton donor/acceptor in the catalytic mechanism. H104 is a binding site for substrate.

It belongs to the methylglyoxal synthase family.

It catalyses the reaction dihydroxyacetone phosphate = methylglyoxal + phosphate. In terms of biological role, catalyzes the formation of methylglyoxal from dihydroxyacetone phosphate. This chain is Methylglyoxal synthase, found in Maridesulfovibrio salexigens (strain ATCC 14822 / DSM 2638 / NCIMB 8403 / VKM B-1763) (Desulfovibrio salexigens).